Here is a 174-residue protein sequence, read N- to C-terminus: Adenine phosphoribosyltransferase (174 aa).

It belongs to the purine/pyrimidine phosphoribosyltransferase family. Homodimer.

It is found in the cytoplasm. It catalyses the reaction AMP + diphosphate = 5-phospho-alpha-D-ribose 1-diphosphate + adenine. The protein operates within purine metabolism; AMP biosynthesis via salvage pathway; AMP from adenine: step 1/1. In terms of biological role, catalyzes a salvage reaction resulting in the formation of AMP, that is energically less costly than de novo synthesis. The sequence is that of Adenine phosphoribosyltransferase from Agathobacter rectalis (strain ATCC 33656 / DSM 3377 / JCM 17463 / KCTC 5835 / VPI 0990) (Eubacterium rectale).